A 248-amino-acid chain; its full sequence is Probable transcriptional regulatory protein PSPA7_4544 (248 aa).

Belongs to the TACO1 family.

The protein resides in the cytoplasm. The polypeptide is Probable transcriptional regulatory protein PSPA7_4544 (Pseudomonas paraeruginosa (strain DSM 24068 / PA7) (Pseudomonas aeruginosa (strain PA7))).